Consider the following 189-residue polypeptide: MVKMIVGLGNPGSKYQQTKHNVGFMAVDRLVKDLDISFTEDKAFKALVGSAFINQEKIYFVKPTTFMNNSGLAVRALLTYYNISTKDLMVIYDDLDMAVGKIRLRQKGSAGGHNGIKSIIAHIGTQEFDRVKIGIGRPSHGMSVINHVLGKFDTDDMITINIALDKVDKAINYYLQEKSIEKTMQQFNG.

A tRNA-binding site is contributed by Tyr-15. Residue His-20 is the Proton acceptor of the active site. The tRNA site is built by Phe-66, Asn-68, and Asn-114.

This sequence belongs to the PTH family. As to quaternary structure, monomer.

It is found in the cytoplasm. It carries out the reaction an N-acyl-L-alpha-aminoacyl-tRNA + H2O = an N-acyl-L-amino acid + a tRNA + H(+). Its function is as follows. Hydrolyzes ribosome-free peptidyl-tRNAs (with 1 or more amino acids incorporated), which drop off the ribosome during protein synthesis, or as a result of ribosome stalling. Catalyzes the release of premature peptidyl moieties from peptidyl-tRNA molecules trapped in stalled 50S ribosomal subunits, and thus maintains levels of free tRNAs and 50S ribosomes. This is Peptidyl-tRNA hydrolase from Streptococcus equi subsp. zooepidemicus (strain MGCS10565).